The primary structure comprises 306 residues: Recombination-associated protein RdgC (306 aa).

It belongs to the RdgC family.

The protein resides in the cytoplasm. It is found in the nucleoid. Its function is as follows. May be involved in recombination. The sequence is that of Recombination-associated protein RdgC from Burkholderia ambifaria (strain MC40-6).